We begin with the raw amino-acid sequence, 135 residues long: uncharacterized protein (135 aa).

A disordered region spans residues 1–36 (MSHAEKPMSDSVNHHHHRTFEVLTAEPVRSRRKPRH).

This sequence belongs to the transposase 8 family.

This is an uncharacterized protein from Sinorhizobium fredii (strain NBRC 101917 / NGR234).